Here is a 335-residue protein sequence, read N- to C-terminus: Phosphatidylinositol:ceramide inositolphosphotransferase (335 aa).

Residues 1–21 lie on the Cytoplasmic side of the membrane; that stretch reads MVLMGPHSALRLLPLKTQAIR. Residues 22–42 form a helical membrane-spanning segment; that stretch reads FVLLLLLSVLILAVALLVTNA. At 43–72 the chain is on the extracellular side; sequence RMPDPKVVRPLPDIGFEVFPKVGWLEHLTD. The chain crosses the membrane as a helical span at residues 73–93; that stretch reads VCIFILNFLSLLVVFKLYLLH. Residues 94–98 are Cytoplasmic-facing; the sequence is RQNEG. Residues 99 to 119 form a helical membrane-spanning segment; that stretch reads LDELQPFSCCPLIGKIIFGVW. Over 120–139 the chain is Extracellular; it reads DSGRQSGIEKRDAHLIAWIR. A helical membrane pass occupies residues 140-160; sequence YFTTYFIVLLFRAIVVVMTSY. The Cytoplasmic portion of the chain corresponds to 161–179; that stretch reads PATDNHCQNPMKITNPVKN. The helical transmembrane segment at 180–200 threads the bilayer; sequence VIMTLVTFGSGSIHCGDLMFS. Residues 201-203 are Extracellular-facing; sequence GHT. His202 is an active-site residue. A helical membrane pass occupies residues 204-224; the sequence is VSITLSLLVQWIYGSMLHWVF. At 225 to 335 the chain is on the cytoplasmic side; sequence RPASVLLVLL…GPACGNFGHW (111 aa). Catalysis depends on residues His245 and Asp249.

The protein belongs to the sphingomyelin synthase family.

The protein resides in the membrane. In terms of biological role, bidirectional lipid inositolphosphotransferase capable of converting phosphatidylinositol (PI) and ceramide to inositol-phosphorylceramide (IPC) and diacylglycerol (DAG) and vice versa. Direction is dependent on the relative concentrations of DAG and ceramide as phosphoinositol acceptors. Essential for viability of the pathogenic bloodstream stage of this human protozoan parasite and, consequently, can be considered as potential drug target. This is Phosphatidylinositol:ceramide inositolphosphotransferase from Trypanosoma cruzi (strain CL Brener).